Consider the following 61-residue polypeptide: Conotoxin Bt5.1 (61 aa).

Residues 1–22 (MRGLPVFVILLLLIASEPSVDA) form the signal peptide. Residues 23 to 48 (RPKTKADVPLTSLNDNAKRTLQILRN) constitute a propeptide that is removed on maturation.

This sequence belongs to the conotoxin T superfamily. In terms of processing, contains 2 disulfide bonds that can be either 'C1-C3, C2-C4' or 'C1-C4, C2-C3', since these disulfide connectivities have been observed for conotoxins with cysteine framework V (for examples, see AC P0DQQ7 and AC P81755). Expressed by the venom duct.

It is found in the secreted. This Conus betulinus (Beech cone) protein is Conotoxin Bt5.1.